We begin with the raw amino-acid sequence, 243 residues long: Uridylate kinase (243 aa).

15-18 is an ATP binding site; it reads KLSG. The segment at 23–28 is involved in allosteric activation by GTP; sequence GSEGFG. Gly-57 lines the UMP pocket. ATP-binding residues include Gly-58 and Arg-62. UMP is bound by residues Asp-77 and 138–145; that span reads TGNPFFTT. ATP-binding residues include Thr-165, Tyr-171, and Asp-174.

This sequence belongs to the UMP kinase family. In terms of assembly, homohexamer.

It localises to the cytoplasm. It catalyses the reaction UMP + ATP = UDP + ADP. It functions in the pathway pyrimidine metabolism; CTP biosynthesis via de novo pathway; UDP from UMP (UMPK route): step 1/1. With respect to regulation, allosterically activated by GTP. Inhibited by UTP. In terms of biological role, catalyzes the reversible phosphorylation of UMP to UDP. The polypeptide is Uridylate kinase (Vibrio cholerae serotype O1 (strain ATCC 39541 / Classical Ogawa 395 / O395)).